A 369-amino-acid chain; its full sequence is Flagellar P-ring protein (369 aa).

The signal sequence occupies residues 1–24 (MSKTISLLKFIICILISLCSFTYA).

The protein belongs to the FlgI family. In terms of assembly, the basal body constitutes a major portion of the flagellar organelle and consists of four rings (L,P,S, and M) mounted on a central rod.

It localises to the bacterial flagellum basal body. In terms of biological role, assembles around the rod to form the L-ring and probably protects the motor/basal body from shearing forces during rotation. This Buchnera aphidicola subsp. Schizaphis graminum (strain Sg) protein is Flagellar P-ring protein.